The chain runs to 157 residues: DNA gyrase inhibitor (157 aa).

It belongs to the DNA gyrase inhibitor family. As to quaternary structure, interacts with DNA gyrase.

The protein localises to the cytoplasm. Its function is as follows. Inhibits the supercoiling activity of DNA gyrase. Acts by inhibiting DNA gyrase at an early step, prior to (or at the step of) binding of DNA by the gyrase. It protects cells against toxins that target DNA gyrase, by inhibiting activity of these toxins and reducing the formation of lethal double-strand breaks in the cell. The chain is DNA gyrase inhibitor from Yersinia enterocolitica serotype O:8 / biotype 1B (strain NCTC 13174 / 8081).